The following is a 211-amino-acid chain: Large ribosomal subunit protein bL25 (211 aa).

This sequence belongs to the bacterial ribosomal protein bL25 family. CTC subfamily. Part of the 50S ribosomal subunit; part of the 5S rRNA/L5/L18/L25 subcomplex. Contacts the 5S rRNA. Binds to the 5S rRNA independently of L5 and L18.

This is one of the proteins that binds to the 5S RNA in the ribosome where it forms part of the central protuberance. The sequence is that of Large ribosomal subunit protein bL25 from Methylobacterium nodulans (strain LMG 21967 / CNCM I-2342 / ORS 2060).